The primary structure comprises 470 residues: tRNA-2-methylthio-N(6)-dimethylallyladenosine synthase (470 aa).

The 116-residue stretch at 1–116 (MTYTVRTYGC…LPALLRRSRH (116 aa)) folds into the MTTase N-terminal domain. [4Fe-4S] cluster is bound by residues Cys10, Cys45, Cys79, Cys153, Cys157, and Cys160. In terms of domain architecture, Radical SAM core spans 139-369 (RESNYSAWVS…LDLQNRIALE (231 aa)). The TRAM domain occupies 372–439 (RKLIGKEVEL…PYHLIGDNAL (68 aa)).

This sequence belongs to the methylthiotransferase family. MiaB subfamily. Monomer. It depends on [4Fe-4S] cluster as a cofactor.

The protein resides in the cytoplasm. It catalyses the reaction N(6)-dimethylallyladenosine(37) in tRNA + (sulfur carrier)-SH + AH2 + 2 S-adenosyl-L-methionine = 2-methylsulfanyl-N(6)-dimethylallyladenosine(37) in tRNA + (sulfur carrier)-H + 5'-deoxyadenosine + L-methionine + A + S-adenosyl-L-homocysteine + 2 H(+). Its function is as follows. Catalyzes the methylthiolation of N6-(dimethylallyl)adenosine (i(6)A), leading to the formation of 2-methylthio-N6-(dimethylallyl)adenosine (ms(2)i(6)A) at position 37 in tRNAs that read codons beginning with uridine. This Tropheryma whipplei (strain Twist) (Whipple's bacillus) protein is tRNA-2-methylthio-N(6)-dimethylallyladenosine synthase.